The primary structure comprises 901 residues: HTH-type transcriptional regulator MalT (901 aa).

39 to 46 (SPAGYGKT) lines the ATP pocket. Residues 829-894 (ELIRTSPLTQ…DAVQHAQQLL (66 aa)) enclose the HTH luxR-type domain. Positions 853-872 (NEQIAGELAVAATTIKTHIR) form a DNA-binding region, H-T-H motif.

Belongs to the MalT family. As to quaternary structure, monomer in solution. Oligomerizes to an active state in the presence of the positive effectors ATP and maltotriose.

Its activity is regulated as follows. Activated by ATP and maltotriose, which are both required for DNA binding. Its function is as follows. Positively regulates the transcription of the maltose regulon whose gene products are responsible for uptake and catabolism of malto-oligosaccharides. Specifically binds to the promoter region of its target genes, recognizing a short DNA motif called the MalT box. This chain is HTH-type transcriptional regulator MalT, found in Salmonella gallinarum (strain 287/91 / NCTC 13346).